The primary structure comprises 263 residues: Izumo sperm-egg fusion protein 3 (263 aa).

The signal sequence occupies residues 1 to 22; sequence MGDLWVLLFSSLSLAAFHGVRG. The Extracellular segment spans residues 23 to 176; the sequence is CLECDPKFTE…EDPKTAENRE (154 aa). Asparagine 98 and asparagine 128 each carry an N-linked (GlcNAc...) asparagine glycan. Residues 177–197 form a helical membrane-spanning segment; it reads ISLYLIFIAEAVILASAVLLF. Residues 198–263 are Cytoplasmic-facing; sequence HVCISHRRKM…CAESEMQTGT (66 aa). The disordered stretch occupies residues 241 to 263; it reads GRSNSNSLTGEPTCAESEMQTGT.

The protein belongs to the Izumo family. Monomer and homodimer. In terms of tissue distribution, sperm-specific (at protein level).

It is found in the cell membrane. Its subcellular location is the cytoplasmic vesicle. It localises to the secretory vesicle. The protein resides in the acrosome inner membrane. Plays an important role in the biogenesis of the acrosome during sperm development. This is Izumo sperm-egg fusion protein 3 (Izumo3) from Mus musculus (Mouse).